The chain runs to 511 residues: MTVILRPGSVPLSDLETIYWTGAPARLDAAFDAGIAKAAARIAEIVAGNAPVYGINTGFGKLASIKIDSSDVATLQRNLILSHCCGVGQPLTEDIVRLIMALKLISLGRGASGVRLELVRLIEAMLDKGVIPLIPEKGSVGASGDLAPLAHMAAVMMGHGEAFFAGERMKGDAALKAAGLSPVTLAAKEGLALINGTQVSTALALAGLFRAHRAGQAALITGALSTDAAMGSSAPFHPDIHTLRGHKGQIDTAAALRQLLTGSPIRQSHIEGDERVQDPYCIRCQPQVDGACLDLLRSVAATLTIEANAVTDNPLVLSDNSVVSGGNFHAEPVAFAADQIALAVCEIGAISQRRIALLVDPALSYGLPAFLAKKPGLNSGLMIAEVTSAALMSENKQLSHPASVDSTPTSANQEDHVSMACHGARRLLQMTENLFSIIGIEALAAVQGIEFRAPLTTSPELQKAAAAVRGVSSSIEEDRYMADDLKAAGDLVASGRLAAAVSAGILPKLEN.

The 5-imidazolinone (Ala-Gly) cross-link spans 142-144 (ASG). Residue Ser-143 is modified to 2,3-didehydroalanine (Ser).

Belongs to the PAL/histidase family. In terms of processing, contains an active site 4-methylidene-imidazol-5-one (MIO), which is formed autocatalytically by cyclization and dehydration of residues Ala-Ser-Gly.

It is found in the cytoplasm. It catalyses the reaction L-histidine = trans-urocanate + NH4(+). It participates in amino-acid degradation; L-histidine degradation into L-glutamate; N-formimidoyl-L-glutamate from L-histidine: step 1/3. The sequence is that of Histidine ammonia-lyase (hutH) from Rhizobium meliloti (strain 1021) (Ensifer meliloti).